Consider the following 555-residue polypeptide: Cyclin-T1.2 (555 aa).

Disordered regions lie at residues 315–429 (SYKG…NSSK) and 505–555 (PADS…GELV). Residues 321 to 335 (KPLSNSSDSPSTRPS) show a composition bias toward low complexity. The segment covering 341-359 (KNQKVVEQELMEQRMKEAA) has biased composition (basic and acidic residues). The segment covering 382–398 (TSSSASNNSNHQNRSSS) has biased composition (low complexity). A compositionally biased stretch (pro residues) spans 521–543 (PDEPSPPVSQILLPPPPPPPILP).

Belongs to the cyclin family. Cyclin C subfamily.

Its function is as follows. Regulatory subunit of the cyclin-dependent kinase pair (CDK9/cyclin T) complex, also called positive transcription elongation factor B (P-TEFb), which is proposed to facilitate the transition from abortive to production elongation by phosphorylating the CTD (carboxy-terminal domain) of the large subunit of RNA polymerase II (RNAP II). This Caenorhabditis elegans protein is Cyclin-T1.2 (cit-1.2).